Here is a 283-residue protein sequence, read N- to C-terminus: Homeobox protein Hox-C12b (283 aa).

The segment at residues 215-274 (TRKKRKPYSKLQLNELEGEFILNEFITRQRRRELSDRLNLTDQQVKIWFQNRRMKKKRLL) is a DNA-binding region (homeobox).

It belongs to the Abd-B homeobox family.

The protein resides in the nucleus. Functionally, sequence-specific transcription factor which is part of a developmental regulatory system that provides cells with specific positional identities on the anterior-posterior axis. The sequence is that of Homeobox protein Hox-C12b (hoxc12b) from Danio rerio (Zebrafish).